The sequence spans 896 residues: Cytokine receptor common subunit beta (896 aa).

An N-terminal signal peptide occupies residues 1 to 22 (MDQQMALTWGLCYMALVALCWG). The Extracellular segment spans residues 23 to 441 (HGVTEAEETV…SEEYTWKTDW (419 aa)). A disulfide bridge links C39 with C49. N62 carries an N-linked (GlcNAc...) asparagine glycan. Intrachain disulfides connect C77/C99 and C88/C94. A Fibronectin type-III 1 domain is found at 136–243 (PPLPKNVSIS…PEVHWDSQPG (108 aa)). N141 is a glycosylation site (N-linked (GlcNAc...) asparagine). Low complexity predominate over residues 220-233 (SPGSSLSGRPSRWS). The tract at residues 220–243 (SPGSSLSGRPSRWSPEVHWDSQPG) is disordered. 2 cysteine pairs are disulfide-bonded: C253–C263 and C292–C310. The region spanning 343-439 (QMEPPTLNLT…KWSEEYTWKT (97 aa)) is the Fibronectin type-III 2 domain. The N-linked (GlcNAc...) asparagine glycan is linked to N350. Residues 428–432 (WSKWS) carry the WSXWS motif motif. A helical transmembrane segment spans residues 442 to 463 (VMPTLWIVLILVFLILTLLLIL). At 464-896 (RFGCVSVYRT…WDNSQSGKVC (433 aa)) the chain is on the cytoplasmic side. A Box 1 motif motif is present at residues 477 to 485 (WKEKIPNPS). 2 disordered regions span residues 543–620 (EDPN…GGSL) and 658–725 (CGSS…TGPL). 2 stretches are compositionally biased toward polar residues: residues 555–571 (PDTT…QLPN) and 658–668 (CGSSLETSGSP). The span at 716 to 725 (PVLTLPTGPL) shows a compositional bias: low complexity. Phosphoserine occurs at positions 752 and 754. Y765 is subject to Phosphotyrosine. The disordered stretch occupies residues 771-810 (SVSQAAKSPPGHPAPPVASSPTVIPGEPREEVGPASPHPE).

This sequence belongs to the type I cytokine receptor family. Type 4 subfamily. As to quaternary structure, heterodimer of an alpha and a beta subunit. The beta subunit is common to the IL3, IL5 and GM-CSF receptors. The signaling GM-CSF receptor complex is a dodecamer of two head-to-head hexamers of two alpha, two beta, and two ligand subunits. Interacts with TMEM102; this interaction occurs preferentially in the absence of CSF2. Interacts with FCER1G; this interaction is direct. Interacts with LYN. May be phosphorylated by LYN.

Its subcellular location is the membrane. Functionally, high affinity receptor for interleukin-3, interleukin-5 and granulocyte-macrophage colony-stimulating factor. This chain is Cytokine receptor common subunit beta (Csf2rb), found in Mus musculus (Mouse).